Here is an 82-residue protein sequence, read N- to C-terminus: Turripeptide Gsp9.1 (82 aa).

The first 23 residues, 1-23, serve as a signal peptide directing secretion; that stretch reads MMAKLMITVMMVLLLSLQQGADG. Residues 24–46 constitute a propeptide that is removed on maturation; that stretch reads RSKRWRKNQMAASSIMRNLITAR. Residues proline 49 and proline 50 each carry the 4-hydroxyproline modification. Disulfide bonds link cysteine 53–cysteine 68, cysteine 58–cysteine 72, and cysteine 64–cysteine 79. 4-carboxyglutamate occurs at positions 60 and 63.

The protein belongs to the Pg turripeptide superfamily. Expressed by the venom duct.

The protein localises to the secreted. This is Turripeptide Gsp9.1 from Gemmula speciosa (Splendid gem-turris).